The primary structure comprises 414 residues: Methyltransferase-like protein 2 (414 aa).

A disordered region spans residues 56–77 (LNQHSSESNPKKRKRKQKNSSF).

Belongs to the MT-A70-like family.

Probable methyltransferase. This Arabidopsis thaliana (Mouse-ear cress) protein is Methyltransferase-like protein 2.